A 218-amino-acid chain; its full sequence is Monomethylamine corrinoid protein 1 (218 aa).

Residues 1 to 91 form the B12-binding N-terminal domain; that stretch reads MANQEIFDKL…ELEKTKVEGE (91 aa). Positions 94 to 218 constitute a B12-binding domain; that stretch reads TGLAITFVAE…AAKVALNIMK (125 aa). Methylcob(III)alamin is bound at residue histidine 107.

This sequence belongs to the methylamine corrinoid protein family. Can form a complex with MtmB.

It participates in one-carbon metabolism; methanogenesis from methylamine. Functionally, acts as a methyl group carrier between MtmB and MtbA. The sequence is that of Monomethylamine corrinoid protein 1 (mtmC1) from Methanosarcina acetivorans (strain ATCC 35395 / DSM 2834 / JCM 12185 / C2A).